The sequence spans 877 residues: Protein SEY1 homolog (877 aa).

Residues 1 to 735 (MVAFAGGART…LRSIEGEKQN (735 aa)) are Cytoplasmic-facing. The 259-residue stretch at 49-307 (GITYHVVGVL…VPLDGIPSYL (259 aa)) folds into the GB1/RHD3-type G domain. 59-66 (GGQSSGKS) serves as a coordination point for GTP. Residues 388 to 410 (RIDIVRKTEAELEEELLKVELKL) adopt a coiled-coil conformation. Residues 736–756 (LPAWVLPVLLLLGWNEIWYVL) form a helical membrane-spanning segment. The Lumenal segment spans residues 757–759 (SSP). A helical membrane pass occupies residues 760 to 780 (VLLVVVVIIAAVFLRGFLLTQ). Residues 781–877 (WAIFEETGPT…KEEEVPTQKE (97 aa)) are Cytoplasmic-facing. Residues 850 to 877 (PTVLPPSTTSATLTRRLKKEEEVPTQKE) are disordered. Over residues 867 to 877 (KKEEEVPTQKE) the composition is skewed to basic and acidic residues.

It belongs to the TRAFAC class dynamin-like GTPase superfamily. GB1/RHD3 GTPase family. RHD3 subfamily.

It is found in the endoplasmic reticulum membrane. In terms of biological role, probable GTP-binding protein that may be involved in cell development. The sequence is that of Protein SEY1 homolog from Trypanosoma cruzi (strain CL Brener).